Here is a 259-residue protein sequence, read N- to C-terminus: Snake venom serine proteinase 2 (259 aa).

An N-terminal signal peptide occupies residues 1–18 (MVLIRVLANLLILQLSYA). Residues 19–24 (QKSSEL) constitute a propeptide that is removed on maturation. Residues 25–250 (IFGGRPCNRN…HLDWIQSIIA (226 aa)) enclose the Peptidase S1 domain. Intrachain disulfides connect Cys31/Cys162, Cys49/Cys65, Cys97/Cys257, Cys141/Cys211, Cys173/Cys190, and Cys201/Cys226. Catalysis depends on charge relay system residues His64 and Asp109. Residue Ser205 is the Charge relay system of the active site.

This sequence belongs to the peptidase S1 family. Snake venom subfamily. In terms of assembly, monomer. Expressed by the venom gland.

The protein localises to the secreted. Snake venom serine protease that may act in the hemostasis system of the prey. This chain is Snake venom serine proteinase 2, found in Crotalus adamanteus (Eastern diamondback rattlesnake).